The following is a 534-amino-acid chain: Benzaldehyde dehydrogenase, mitochondrial (534 aa).

Residues 1 to 29 constitute a mitochondrion transit peptide; the sequence is MAAHRFSSLLSRSVPLLSRGGKQSYLGRG. NAD(+) is bound by residues 199–202, 225–228, 258–259, 278–279, and 301–303; these read IPWN, KTAE, GP, GS, and ELG. Residue glutamate 301 is the Proton acceptor of the active site. Cysteine 335 serves as the catalytic Nucleophile. Residues 381–385 and 432–434 each bind NAD(+); these read DQFEK and EIF.

Belongs to the aldehyde dehydrogenase family. In terms of assembly, homotetramer. In terms of tissue distribution, expressed predominantly in the upper and lower flower petal lobes, and, at low levels, in flower tubes, pistils, stamens and sepals.

It is found in the mitochondrion. It carries out the reaction an aldehyde + NAD(+) + H2O = a carboxylate + NADH + 2 H(+). The catalysed reaction is acetaldehyde + NAD(+) + H2O = acetate + NADH + 2 H(+). It catalyses the reaction benzaldehyde + NAD(+) + H2O = benzoate + NADH + 2 H(+). The enzyme catalyses 2-phenylacetaldehyde + NAD(+) + H2O = 2-phenylacetate + NADH + 2 H(+). The protein operates within aromatic compound metabolism. With respect to regulation, inhibited by disulfiram. Functionally, component of the floral volatile benzenoid/phenylpropanoid (FVBP) biosynthetic pathway. Catalyzes the oxidation of benzaldehyde to benzoic acid (BA). Capable of oxidizing a broad spectrum of aliphatic aldehydes; increased carbon chain length results in a decrease in its efficiency. This Antirrhinum majus (Garden snapdragon) protein is Benzaldehyde dehydrogenase, mitochondrial.